Reading from the N-terminus, the 801-residue chain is Cadherin-20 (801 aa).

The signal sequence occupies residues 1-34 (MWTSGRMSNAKNWLGLGMSLYFWGLMDLTTTVLS). A propeptide spanning residues 35-59 (DTPTPQGELEALLSDKPQSHQRTKR) is cleaved from the precursor. Over 60–619 (SWVWNQFFVL…AYMLPVSLSR (560 aa)) the chain is Extracellular. Cadherin domains follow at residues 61–165 (WVWN…EPKF), 166–274 (LDGP…PPRF), 275–389 (PQKH…PPVF), 390–494 (EPGF…APEF), and 494–610 (FPRF…SPEA). N-linked (GlcNAc...) asparagine glycosylation is present at Asn-261. 3 N-linked (GlcNAc...) asparagine glycosylation sites follow: Asn-420, Asn-461, and Asn-542. The chain crosses the membrane as a helical span at residues 620-640 (GALIAILACIFVLLVLVLLIL). Topologically, residues 641-801 (SMRRHRKQPY…GASEGPAPLW (161 aa)) are cytoplasmic.

Expressed in placenta, adult brain, and fetal brain.

Its subcellular location is the cell membrane. In terms of biological role, cadherins are calcium-dependent cell adhesion proteins. They preferentially interact with themselves in a homophilic manner in connecting cells; cadherins may thus contribute to the sorting of heterogeneous cell types. The protein is Cadherin-20 (CDH20) of Homo sapiens (Human).